We begin with the raw amino-acid sequence, 153 residues long: Riboflavin synthase (153 aa).

It belongs to the DMRL synthase family. Homooligomer. Mg(2+) serves as cofactor.

It carries out the reaction 2 6,7-dimethyl-8-(1-D-ribityl)lumazine + H(+) = 5-amino-6-(D-ribitylamino)uracil + riboflavin. It functions in the pathway cofactor biosynthesis; riboflavin biosynthesis; riboflavin from 2-hydroxy-3-oxobutyl phosphate and 5-amino-6-(D-ribitylamino)uracil: step 2/2. Inhibited by EDTA. The sequence is that of Riboflavin synthase (ribC) from Methanothermobacter thermautotrophicus (strain ATCC 29096 / DSM 1053 / JCM 10044 / NBRC 100330 / Delta H) (Methanobacterium thermoautotrophicum).